Consider the following 357-residue polypeptide: Dual-specificity RNA methyltransferase RlmN (357 aa).

Catalysis depends on Glu89, which acts as the Proton acceptor. The Radical SAM core domain occupies 109-340 (EGEKYTVCVS…CTIRESKALD (232 aa)). The cysteines at positions 116 and 345 are disulfide-linked. Residues Cys123, Cys127, and Cys130 each contribute to the [4Fe-4S] cluster site. S-adenosyl-L-methionine is bound by residues 173 to 174 (GE), Ser203, 226 to 228 (SLH), and Asn302. Catalysis depends on Cys345, which acts as the S-methylcysteine intermediate.

It belongs to the radical SAM superfamily. RlmN family. Requires [4Fe-4S] cluster as cofactor.

The protein localises to the cytoplasm. It carries out the reaction adenosine(2503) in 23S rRNA + 2 reduced [2Fe-2S]-[ferredoxin] + 2 S-adenosyl-L-methionine = 2-methyladenosine(2503) in 23S rRNA + 5'-deoxyadenosine + L-methionine + 2 oxidized [2Fe-2S]-[ferredoxin] + S-adenosyl-L-homocysteine. It catalyses the reaction adenosine(37) in tRNA + 2 reduced [2Fe-2S]-[ferredoxin] + 2 S-adenosyl-L-methionine = 2-methyladenosine(37) in tRNA + 5'-deoxyadenosine + L-methionine + 2 oxidized [2Fe-2S]-[ferredoxin] + S-adenosyl-L-homocysteine. Specifically methylates position 2 of adenine 2503 in 23S rRNA and position 2 of adenine 37 in tRNAs. m2A2503 modification seems to play a crucial role in the proofreading step occurring at the peptidyl transferase center and thus would serve to optimize ribosomal fidelity. The sequence is that of Dual-specificity RNA methyltransferase RlmN from Helicobacter pylori (strain G27).